We begin with the raw amino-acid sequence, 226 residues long: Ribonuclease 3 (226 aa).

One can recognise an RNase III domain in the interval 6 to 128 (INKLQRKLGY…LIGGVFLDSD (123 aa)). Glutamate 41 contributes to the Mg(2+) binding site. The active site involves aspartate 45. Positions 114 and 117 each coordinate Mg(2+). The active site involves glutamate 117. The 71-residue stretch at 155–225 (DPKTRLQEYL…AEQALIKLGL (71 aa)) folds into the DRBM domain.

It belongs to the ribonuclease III family. In terms of assembly, homodimer. Requires Mg(2+) as cofactor.

The protein resides in the cytoplasm. It carries out the reaction Endonucleolytic cleavage to 5'-phosphomonoester.. Digests double-stranded RNA. Involved in the processing of primary rRNA transcript to yield the immediate precursors to the large and small rRNAs (23S and 16S). Processes some mRNAs, and tRNAs when they are encoded in the rRNA operon. Processes pre-crRNA and tracrRNA of type II CRISPR loci if present in the organism. This chain is Ribonuclease 3 (rnc), found in Pantoea ananatis (strain LMG 20103).